Reading from the N-terminus, the 344-residue chain is Cyclin-G2 (344 aa).

Residues 298–324 (CFDGSESEDSGEDMSCGEESLSSSPPS) form a disordered region. Residues 302-313 (SESEDSGEDMSC) are compositionally biased toward acidic residues.

It belongs to the cyclin family. Cyclin G subfamily. Highest levels in intestine. Intermediate levels in spleen, brain and kidney. Low levels in testis, stomach, pancreas, liver, salivary gland and muscle. According to PubMed:9139721 also abundant in thymus.

Its subcellular location is the cytoplasm. The protein localises to the nucleus. Functionally, may play a role in growth regulation and in negative regulation of cell cycle progression. The polypeptide is Cyclin-G2 (Ccng2) (Mus musculus (Mouse)).